We begin with the raw amino-acid sequence, 723 residues long: Probable C-mannosyltransferase DPY19L4 (723 aa).

The interval 1-33 (MAEEEGPPVELRQRKKPKSSENKESAKEEKISD) is disordered. The residue at position 2 (Ala2) is an N-acetylalanine. The span at 18–32 (KSSENKESAKEEKIS) shows a compositional bias: basic and acidic residues. Transmembrane regions (helical) follow at residues 52 to 72 (IFIG…YLSA), 161 to 178 (VYFY…YVTA), 184 to 202 (WLMS…WFVI), 222 to 240 (LPYF…KSNL), 260 to 280 (MMMW…LFLL), 292 to 310 (YEVY…LLQF), 316 to 337 (LVSP…QLNV), 349 to 370 (VINF…KMFV), 421 to 441 (LLPF…QVIF), 466 to 486 (IIYH…IEGL), 489 to 509 (IWIP…ELWM), and 522 to 542 (PILL…LSLW).

Belongs to the dpy-19 family. In terms of tissue distribution, widely expressed.

It is found in the membrane. Functionally, probable C-mannosyltransferase that mediates C-mannosylation of tryptophan residues on target proteins. The sequence is that of Probable C-mannosyltransferase DPY19L4 (DPY19L4) from Homo sapiens (Human).